We begin with the raw amino-acid sequence, 498 residues long: ATP synthase subunit beta, chloroplastic (498 aa).

172 to 179 (GGAGVGKT) lines the ATP pocket.

The protein belongs to the ATPase alpha/beta chains family. F-type ATPases have 2 components, CF(1) - the catalytic core - and CF(0) - the membrane proton channel. CF(1) has five subunits: alpha(3), beta(3), gamma(1), delta(1), epsilon(1). CF(0) has four main subunits: a(1), b(1), b'(1) and c(9-12).

The protein resides in the plastid. It localises to the chloroplast thylakoid membrane. It catalyses the reaction ATP + H2O + 4 H(+)(in) = ADP + phosphate + 5 H(+)(out). Its function is as follows. Produces ATP from ADP in the presence of a proton gradient across the membrane. The catalytic sites are hosted primarily by the beta subunits. This Lemna minor (Common duckweed) protein is ATP synthase subunit beta, chloroplastic.